The following is a 277-amino-acid chain: uncharacterized protein (277 aa).

Residues 232-262 (NNESAICESQASSKEDERSDKTTSSSKKKSF) are disordered. Polar residues predominate over residues 234-243 (ESAICESQAS).

The protein resides in the cytoplasm. It is found in the nucleus. This is an uncharacterized protein from Schizosaccharomyces pombe (strain 972 / ATCC 24843) (Fission yeast).